Reading from the N-terminus, the 269-residue chain is Phosphate import ATP-binding protein PstB 1 (269 aa).

One can recognise an ABC transporter domain in the interval 25-264 (LSTEDLHVFY…PQVDLTNDYI (240 aa)). 57–64 (GPSGSGKS) contacts ATP.

It belongs to the ABC transporter superfamily. Phosphate importer (TC 3.A.1.7) family. The complex is composed of two ATP-binding proteins (PstB), two transmembrane proteins (PstC and PstA) and a solute-binding protein (PstS).

The protein localises to the cell membrane. The catalysed reaction is phosphate(out) + ATP + H2O = ADP + 2 phosphate(in) + H(+). Part of the ABC transporter complex PstSACB involved in phosphate import. Responsible for energy coupling to the transport system. In Lactiplantibacillus plantarum (strain ATCC BAA-793 / NCIMB 8826 / WCFS1) (Lactobacillus plantarum), this protein is Phosphate import ATP-binding protein PstB 1.